A 1881-amino-acid polypeptide reads, in one-letter code: Kinesin-like protein KIF26A (1881 aa).

3 disordered regions span residues 20 to 66, 145 to 193, and 309 to 330; these read PARE…AGGG, PASH…PPGP, and ASKR…STYP. Position 30 is a phosphoserine (S30). The Kinesin motor domain occupies 364 to 718; the sequence is KVKVMLRIWP…VQLAARIHRL (355 aa). 462 to 469 contributes to the ATP binding site; sequence GHMSLGKS. 8 disordered regions span residues 718 to 778, 794 to 827, 846 to 982, 1078 to 1104, 1118 to 1266, 1328 to 1425, 1442 to 1633, and 1652 to 1698; these read LRRK…SSEQ, SDRE…RDAD, GSEA…QAAL, YTSQ…GSPA, LSES…PRLP, SGSL…PYRP, SKVR…SGEL, and YESM…TGLQ. The span at 742–751 shows a compositional bias: basic residues; sequence RRPPHLRPFH. Positions 818-827 are enriched in basic and acidic residues; the sequence is RPSEGPRDAD. Over residues 905-915 the composition is skewed to polar residues; that stretch reads SDPSKTGTQSE. Pro residues predominate over residues 940–950; that stretch reads LPSPAPPPPRQ. Residues 1084-1095 are compositionally biased toward low complexity; the sequence is EGPGDPGEFPEG. Residues 1151 to 1162 show a composition bias toward basic and acidic residues; it reads EESKVRSSECGR. The residue at position 1257 (S1257) is a Phosphoserine. The span at 1328-1353 shows a compositional bias: low complexity; the sequence is SGSLKTTSGSKKSVSPKGAFFPRPSG. Positions 1366–1378 are enriched in polar residues; sequence LEQSTALTPTQAL. The segment covering 1390-1399 has biased composition (basic and acidic residues); the sequence is RGEEEARPSG. Over residues 1400-1412 the composition is skewed to polar residues; it reads RSDSSVPKATSSL. Composition is skewed to low complexity over residues 1477 to 1489, 1524 to 1537, and 1575 to 1587; these read PAKG…PPAG, PGPR…PGIG, and WGST…NDSG. The span at 1616–1629 shows a compositional bias: polar residues; the sequence is RYSSGHGSDNSSVL. S1654 is subject to Phosphoserine. The segment covering 1664–1675 has biased composition (low complexity); it reads SASSAPDSMSES. Basic residues predominate over residues 1685 to 1698; that stretch reads RSLKSPKKRATGLQ. A coiled-coil region spans residues 1780–1812; that stretch reads LRLAERRQQRLQEVQAKRDHLCEELAETQGRLM.

The protein belongs to the TRAFAC class myosin-kinesin ATPase superfamily. Kinesin family. KIF26 subfamily. In terms of assembly, interacts with GRB2 (via SH2 domain). As to expression, expressed in several neuronal populations.

The protein localises to the cytoplasm. It localises to the cytoskeleton. In terms of biological role, atypical kinesin that plays a key role in enteric neuron development. Acts by repressing a cell growth signaling pathway in the enteric nervous system development, possibly via its interaction with GRB2 that prevents GRB2-binding to SHC, thereby attenating the GDNF-Ret signaling. Binds to microtubules but lacks microtubule-based motility due to the absence of ATPase activity. Plays a critical role in cerebral cortical development. It probably acts as a microtubule stabilizer that regulates neurite growth and radial migration of cortical excitatory neurons. The chain is Kinesin-like protein KIF26A (Kif26a) from Mus musculus (Mouse).